Here is a 197-residue protein sequence, read N- to C-terminus: Probable GTP-binding protein EngB (197 aa).

The EngB-type G domain occupies G22 to G195. Residues G30–S37, G57–T61, D75–G78, T142–D145, and F174–A176 each bind GTP. Residues S37 and T59 each coordinate Mg(2+).

Belongs to the TRAFAC class TrmE-Era-EngA-EngB-Septin-like GTPase superfamily. EngB GTPase family. Requires Mg(2+) as cofactor.

Its function is as follows. Necessary for normal cell division and for the maintenance of normal septation. This Lactiplantibacillus plantarum (strain ATCC BAA-793 / NCIMB 8826 / WCFS1) (Lactobacillus plantarum) protein is Probable GTP-binding protein EngB.